The sequence spans 390 residues: 1-deoxy-D-xylulose 5-phosphate reductoisomerase (390 aa).

The NADPH site is built by Thr10, Gly11, Ser12, Val13, and Asn124. 1-deoxy-D-xylulose 5-phosphate is bound at residue Lys125. Glu126 provides a ligand contact to NADPH. Position 150 (Asp150) interacts with Mn(2+). Residues Ser151, Glu152, Ser181, and His204 each coordinate 1-deoxy-D-xylulose 5-phosphate. Position 152 (Glu152) interacts with Mn(2+). NADPH is bound at residue Gly210. 1-deoxy-D-xylulose 5-phosphate contacts are provided by Ser217, Asn222, Lys223, and Glu226. A Mn(2+)-binding site is contributed by Glu226.

It belongs to the DXR family. Mg(2+) serves as cofactor. Requires Mn(2+) as cofactor.

The enzyme catalyses 2-C-methyl-D-erythritol 4-phosphate + NADP(+) = 1-deoxy-D-xylulose 5-phosphate + NADPH + H(+). It participates in isoprenoid biosynthesis; isopentenyl diphosphate biosynthesis via DXP pathway; isopentenyl diphosphate from 1-deoxy-D-xylulose 5-phosphate: step 1/6. Functionally, catalyzes the NADPH-dependent rearrangement and reduction of 1-deoxy-D-xylulose-5-phosphate (DXP) to 2-C-methyl-D-erythritol 4-phosphate (MEP). This is 1-deoxy-D-xylulose 5-phosphate reductoisomerase from Janthinobacterium sp. (strain Marseille) (Minibacterium massiliensis).